Here is a 464-residue protein sequence, read N- to C-terminus: NADH dehydrogenase [ubiquinone] flavoprotein 1, mitochondrial (464 aa).

A mitochondrion-targeting transit peptide spans 1-20 (MLAARRLLGWSLPARVSVRF). K81 bears the N6-acetyllysine; alternate mark. N6-succinyllysine; alternate is present on K81. Position 87-96 (87-96 (GRGGAGFPTG)) interacts with NADH. N6-acetyllysine is present on K104. 199–247 (RGAGAYICGEETALIESIEGKQGKPRLKPPFPADVGVFGCPTTVANVET) serves as a coordination point for FMN. R257 carries the omega-N-methylarginine modification. Position 375 is an N6-acetyllysine (K375). [4Fe-4S] cluster contacts are provided by C379, C382, C385, and C425.

This sequence belongs to the complex I 51 kDa subunit family. Core subunit of respiratory chain NADH dehydrogenase (Complex I) which is composed of 45 different subunits. This is a component of the flavoprotein-sulfur (FP) fragment of the enzyme. Interacts with RAB5IF. FMN serves as cofactor. The cofactor is [4Fe-4S] cluster.

It localises to the mitochondrion inner membrane. It catalyses the reaction a ubiquinone + NADH + 5 H(+)(in) = a ubiquinol + NAD(+) + 4 H(+)(out). Core subunit of the mitochondrial membrane respiratory chain NADH dehydrogenase (Complex I) which catalyzes electron transfer from NADH through the respiratory chain, using ubiquinone as an electron acceptor. Part of the peripheral arm of the enzyme, where the electrons from NADH are accepted by flavin mononucleotide (FMN) and then passed along a chain of iron-sulfur clusters by electron tunnelling to the final acceptor ubiquinone. Contains FMN, which is the initial electron acceptor as well as one iron-sulfur cluster. The protein is NADH dehydrogenase [ubiquinone] flavoprotein 1, mitochondrial of Pongo pygmaeus (Bornean orangutan).